The chain runs to 234 residues: 7-carboxy-7-deazaguanine synthase (234 aa).

The interval 1–28 (MPLNCDTKTAGEISSSIPSGSGSHQPAA) is disordered. The span at 13-23 (ISSSIPSGSGS) shows a compositional bias: low complexity. Substrate contacts are provided by residues 42-44 (LQG) and arginine 57. Residues 48 to 234 (TSGYPTIFIR…LQLHKFIGLP (187 aa)) form the Radical SAM core domain. Residues cysteine 61, cysteine 65, and cysteine 68 each coordinate [4Fe-4S] cluster. Threonine 70 lines the Mg(2+) pocket. Threonine 100 contacts substrate. Glycine 102 contributes to the S-adenosyl-L-methionine binding site. Residue proline 234 participates in substrate binding.

This sequence belongs to the radical SAM superfamily. 7-carboxy-7-deazaguanine synthase family. Homodimer. [4Fe-4S] cluster serves as cofactor. Requires S-adenosyl-L-methionine as cofactor. The cofactor is Mg(2+).

The catalysed reaction is 6-carboxy-5,6,7,8-tetrahydropterin + H(+) = 7-carboxy-7-deazaguanine + NH4(+). It functions in the pathway purine metabolism; 7-cyano-7-deazaguanine biosynthesis. Catalyzes the complex heterocyclic radical-mediated conversion of 6-carboxy-5,6,7,8-tetrahydropterin (CPH4) to 7-carboxy-7-deazaguanine (CDG), a step common to the biosynthetic pathways of all 7-deazapurine-containing compounds. This chain is 7-carboxy-7-deazaguanine synthase, found in Methanospirillum hungatei JF-1 (strain ATCC 27890 / DSM 864 / NBRC 100397 / JF-1).